The following is a 218-amino-acid chain: Ohanin-like protein (218 aa).

An N-terminal signal peptide occupies residues 1-40 (MSPSAGFQFSLYFLQTKKVLWKLTGLCYILLFTLCFFADQ). The propeptide occupies 41-48 (ENGGKALA). Residues 49–155 (SPPGIWKRAD…RIWQTGLWWL (107 aa)) enclose the B30.2/SPRY domain. Positions 156–218 (RHLETDPGRV…LGGTVSLTTL (63 aa)) are excised as a propeptide.

Belongs to the ohanin/vespryn family. In terms of tissue distribution, expressed by the venom gland.

The protein resides in the secreted. In terms of biological role, neurotoxin that produces dose-dependent hypolocomotion and hyperalgesia in mice. May directly act on the central nervous system, as it is 6500-fold more potent when administered intracerebroventricularly than intraperitoneal. This is Ohanin-like protein from Lachesis muta muta (Bushmaster).